A 295-amino-acid chain; its full sequence is 4-diphosphocytidyl-2-C-methyl-D-erythritol kinase (295 aa).

K15 is a catalytic residue. Residue 102 to 112 coordinates ATP; it reads PIASGVGGGSS. The active site involves D144.

It belongs to the GHMP kinase family. IspE subfamily.

It carries out the reaction 4-CDP-2-C-methyl-D-erythritol + ATP = 4-CDP-2-C-methyl-D-erythritol 2-phosphate + ADP + H(+). The protein operates within isoprenoid biosynthesis; isopentenyl diphosphate biosynthesis via DXP pathway; isopentenyl diphosphate from 1-deoxy-D-xylulose 5-phosphate: step 3/6. Its function is as follows. Catalyzes the phosphorylation of the position 2 hydroxy group of 4-diphosphocytidyl-2C-methyl-D-erythritol. This Mesorhizobium japonicum (strain LMG 29417 / CECT 9101 / MAFF 303099) (Mesorhizobium loti (strain MAFF 303099)) protein is 4-diphosphocytidyl-2-C-methyl-D-erythritol kinase.